We begin with the raw amino-acid sequence, 877 residues long: Valine--tRNA ligase (877 aa).

The 'HIGH' region motif lies at 46–56 (PYPTGSIHMGH). A 'KMSKS' region motif is present at residues 529–533 (KMSKS). Lys-532 provides a ligand contact to ATP.

This sequence belongs to the class-I aminoacyl-tRNA synthetase family. ValS type 2 subfamily.

The protein localises to the cytoplasm. The enzyme catalyses tRNA(Val) + L-valine + ATP = L-valyl-tRNA(Val) + AMP + diphosphate. Catalyzes the attachment of valine to tRNA(Val). As ValRS can inadvertently accommodate and process structurally similar amino acids such as threonine, to avoid such errors, it has a 'posttransfer' editing activity that hydrolyzes mischarged Thr-tRNA(Val) in a tRNA-dependent manner. This is Valine--tRNA ligase from Methanothermobacter thermautotrophicus (strain ATCC 29096 / DSM 1053 / JCM 10044 / NBRC 100330 / Delta H) (Methanobacterium thermoautotrophicum).